An 847-amino-acid chain; its full sequence is Cancer-associated gene 1 protein homolog (847 aa).

The interval 118 to 161 is disordered; sequence EEKPELQSQVYNDPADASQKPDPLKEESLMESSTSENKDELVHE. Residues 377–567 are a coiled coil; sequence NVILEKNDIN…AAKREAQACT (191 aa).

In Rattus norvegicus (Rat), this protein is Cancer-associated gene 1 protein homolog (Cage1).